A 274-amino-acid chain; its full sequence is Dermonecrotic toxin SdSicTox-betaIIB1bx (274 aa).

The active site involves His5. 2 residues coordinate Mg(2+): Glu25 and Asp27. Residue His41 is the Nucleophile of the active site. 2 cysteine pairs are disulfide-bonded: Cys45-Cys51 and Cys47-Cys190. Asp85 contributes to the Mg(2+) binding site.

This sequence belongs to the arthropod phospholipase D family. Class II subfamily. The cofactor is Mg(2+). As to expression, expressed by the venom gland.

It is found in the secreted. The catalysed reaction is an N-(acyl)-sphingosylphosphocholine = an N-(acyl)-sphingosyl-1,3-cyclic phosphate + choline. It carries out the reaction an N-(acyl)-sphingosylphosphoethanolamine = an N-(acyl)-sphingosyl-1,3-cyclic phosphate + ethanolamine. The enzyme catalyses a 1-acyl-sn-glycero-3-phosphocholine = a 1-acyl-sn-glycero-2,3-cyclic phosphate + choline. It catalyses the reaction a 1-acyl-sn-glycero-3-phosphoethanolamine = a 1-acyl-sn-glycero-2,3-cyclic phosphate + ethanolamine. Its function is as follows. Dermonecrotic toxins cleave the phosphodiester linkage between the phosphate and headgroup of certain phospholipids (sphingolipid and lysolipid substrates), forming an alcohol (often choline) and a cyclic phosphate. This toxin acts on sphingomyelin (SM). It may also act on ceramide phosphoethanolamine (CPE), lysophosphatidylcholine (LPC) and lysophosphatidylethanolamine (LPE), but not on lysophosphatidylserine (LPS), and lysophosphatidylglycerol (LPG). It acts by transphosphatidylation, releasing exclusively cyclic phosphate products as second products. Induces dermonecrosis, hemolysis, increased vascular permeability, edema, inflammatory response, and platelet aggregation. The protein is Dermonecrotic toxin SdSicTox-betaIIB1bx of Sicarius cf. damarensis (strain GJB-2008) (Six-eyed sand spider).